A 681-amino-acid chain; its full sequence is Peroxisomal acyl-coenzyme A oxidase 2 (681 aa).

Residues methionine 1–serine 28 are disordered. Serine 9 bears the Phosphoserine mark. At threonine 13 the chain carries Phosphothreonine. Residues tryptophan 14–serine 28 are compositionally biased toward basic and acidic residues. An N6-succinyllysine mark is found at lysine 66, lysine 137, lysine 303, lysine 453, lysine 561, and lysine 667. The Microbody targeting signal motif lies at proline 679–leucine 681.

This sequence belongs to the acyl-CoA oxidase family. In terms of assembly, homodimer. The cofactor is FAD. In terms of processing, acetylation of Lys-667 is observed in liver mitochondria from fasted mice but not from fed mice.

The protein localises to the peroxisome. The enzyme catalyses (25R)-3alpha,7alpha,12alpha-trihydroxy-5beta-cholestan-26-oyl-CoA + A + H2O = (24R,25R)-3alpha,7alpha,12alpha,24-tetrahydroxy-5beta-cholestan-26-oyl-CoA + AH2. It carries out the reaction (25S)-3alpha,7alpha,12alpha-trihydroxy-5beta-cholestan-26-oyl-CoA + O2 = (24E)-3alpha,7alpha,12alpha-trihydroxy-5beta-cholest-24-en-26-oyl-CoA + H2O2. Its function is as follows. Oxidizes the CoA esters of the bile acid intermediates di- and tri-hydroxycoprostanic acids. Capable of oxidizing short as well as long chain 2-methyl branched fatty acids. The polypeptide is Peroxisomal acyl-coenzyme A oxidase 2 (Mus musculus (Mouse)).